The primary structure comprises 226 residues: ATP synthase F(0) complex subunit a (226 aa).

The next 6 membrane-spanning stretches (helical) occupy residues V13 to W33, W69 to L89, T97 to A117, I138 to V158, F179 to L199, and L201 to Y221.

This sequence belongs to the ATPase A chain family. As to quaternary structure, component of the ATP synthase complex composed at least of ATP5F1A/subunit alpha, ATP5F1B/subunit beta, ATP5MC1/subunit c (homooctomer), MT-ATP6/subunit a, MT-ATP8/subunit 8, ATP5ME/subunit e, ATP5MF/subunit f, ATP5MG/subunit g, ATP5MK/subunit k, ATP5MJ/subunit j, ATP5F1C/subunit gamma, ATP5F1D/subunit delta, ATP5F1E/subunit epsilon, ATP5PF/subunit F6, ATP5PB/subunit b, ATP5PD/subunit d, ATP5PO/subunit OSCP. ATP synthase complex consists of a soluble F(1) head domain (subunits alpha(3) and beta(3)) - the catalytic core - and a membrane F(0) domain - the membrane proton channel (subunits c, a, 8, e, f, g, k and j). These two domains are linked by a central stalk (subunits gamma, delta, and epsilon) rotating inside the F1 region and a stationary peripheral stalk (subunits F6, b, d, and OSCP). Interacts with DNAJC30; interaction is direct.

The protein localises to the mitochondrion inner membrane. It catalyses the reaction H(+)(in) = H(+)(out). Subunit a, of the mitochondrial membrane ATP synthase complex (F(1)F(0) ATP synthase or Complex V) that produces ATP from ADP in the presence of a proton gradient across the membrane which is generated by electron transport complexes of the respiratory chain. ATP synthase complex consist of a soluble F(1) head domain - the catalytic core - and a membrane F(1) domain - the membrane proton channel. These two domains are linked by a central stalk rotating inside the F(1) region and a stationary peripheral stalk. During catalysis, ATP synthesis in the catalytic domain of F(1) is coupled via a rotary mechanism of the central stalk subunits to proton translocation. With the subunit c (ATP5MC1), forms the proton-conducting channel in the F(0) domain, that contains two crucial half-channels (inlet and outlet) that facilitate proton movement from the mitochondrial intermembrane space (IMS) into the matrix. Protons are taken up via the inlet half-channel and released through the outlet half-channel, following a Grotthuss mechanism. This Xenopus laevis (African clawed frog) protein is ATP synthase F(0) complex subunit a.